The sequence spans 500 residues: Cysteine-rich secretory protein LCCL domain-containing 1 (500 aa).

Positions 1-23 are cleaved as a signal peptide; it reads MKCTAREWLRVTTVLFMARAIPA. Residues 66 to 206 form the SCP domain; sequence LDLHNKLRSQ…PKAVYLVCNY (141 aa). Positions 254–280 are enriched in basic and acidic residues; the sequence is EETNEIERQQSQVHDTHVRTRSDDSSR. The disordered stretch occupies residues 254–281; that stretch reads EETNEIERQQSQVHDTHVRTRSDDSSRN. LCCL domains follow at residues 289-384 and 390-492; these read MSQI…ANSF and TVQA…PGGK. 4 cysteine pairs are disulfide-bonded: cysteine 295/cysteine 313, cysteine 317/cysteine 337, cysteine 396/cysteine 418, and cysteine 422/cysteine 445.

This sequence belongs to the CRISP family.

The protein localises to the secreted. This Homo sapiens (Human) protein is Cysteine-rich secretory protein LCCL domain-containing 1 (CRISPLD1).